We begin with the raw amino-acid sequence, 516 residues long: Levanbiose-producing levanase (516 aa).

Residues 1-5 (MNYIK) lie on the Cytoplasmic side of the membrane. The chain crosses the membrane as a helical span at residues 6 to 26 (AGKWLTVFLTFLGILLFIDLF). Topologically, residues 27–516 (PKEEHDQKTK…TVKHFDSIHE (490 aa)) are extracellular. Residues 55–58 (WKND), 116–117 (WT), 181–182 (RD), E230, and W318 contribute to the substrate site. D58 is a catalytic residue.

It belongs to the glycosyl hydrolase 32 family.

It localises to the cell membrane. The catalysed reaction is Hydrolysis of (2-&gt;6)-beta-D-fructofuranan, to remove successive disaccharide residues as levanbiose, i.e. 6-(beta-D-fructofuranosyl)-D-fructose, from the end of the chain.. In terms of biological role, catalyzes the degradation of levan mainly into levanbiose (difructose). Is not active on sucrose. The chain is Levanbiose-producing levanase (levB) from Bacillus subtilis (strain 168).